The following is a 93-amino-acid chain: Phosphoribosyl-ATP pyrophosphatase (93 aa).

Belongs to the PRA-PH family.

Its subcellular location is the cytoplasm. It catalyses the reaction 1-(5-phospho-beta-D-ribosyl)-ATP + H2O = 1-(5-phospho-beta-D-ribosyl)-5'-AMP + diphosphate + H(+). The protein operates within amino-acid biosynthesis; L-histidine biosynthesis; L-histidine from 5-phospho-alpha-D-ribose 1-diphosphate: step 2/9. This chain is Phosphoribosyl-ATP pyrophosphatase, found in Mycolicibacterium smegmatis (strain ATCC 700084 / mc(2)155) (Mycobacterium smegmatis).